Reading from the N-terminus, the 190-residue chain is Small ribosomal subunit protein uS4 (190 aa).

Residues 105-181 form the S4 RNA-binding domain; that stretch reads RRLQTLVYKL…RKKAKAAEGG (77 aa). The interval 163 to 190 is disordered; the sequence is GGGRPGRVRRKKAKAAEGGDGDAEEDEE. Residues 181 to 190 show a composition bias toward acidic residues; it reads GDGDAEEDEE.

The protein belongs to the universal ribosomal protein uS4 family.

In Podospora anserina (Pleurage anserina), this protein is Small ribosomal subunit protein uS4 (RPS9).